The following is a 421-amino-acid chain: Cyclin-A1 (421 aa).

Positions Met1–Ala21 are disordered.

The protein belongs to the cyclin family. Cyclin AB subfamily. Interacts with INCA1 and KLHDC9. Interacts with the CDK2 and CDC2 protein kinases to form a serine/threonine kinase holoenzyme complex. The cyclin subunit imparts substrate specificity to the complex. Found in a complex with CDK2, CABLES1 and CCNE1. In terms of processing, polyubiquitinated via 'Lys-11'-linked ubiquitin by the anaphase-promoting complex (APC/C), leading to its degradation by the proteasome. Deubiquitinated and stabilized by USP37 enables entry into S phase. Ubiquitinated during the G1 phase by the SCF(FBXO31) complex, leading to its proteasomal degradation. In terms of tissue distribution, testis and ovaries.

Its subcellular location is the nucleus. The protein resides in the cytoplasm. The protein localises to the cytoskeleton. It localises to the spindle. Functionally, may be involved in the control of the cell cycle at the G1/S (start) and G2/M (mitosis) transitions. May primarily function in the control of the germline meiotic cell cycle and additionally in the control of mitotic cell cycle in some somatic cells. The protein is Cyclin-A1 (Ccna1) of Mus musculus (Mouse).